The chain runs to 274 residues: 16S rRNA (guanine(1405)-N(7))-methyltransferase (274 aa).

Residues phenylalanine 64, histidine 102–serine 104, arginine 108, alanine 133, aspartate 156, aspartate 182–leucine 183, leucine 198, and glutamine 207 contribute to the S-adenosyl-L-methionine site.

It belongs to the methyltransferase superfamily. Aminoglycoside resistance family.

It catalyses the reaction guanosine(1405) in 16S rRNA + S-adenosyl-L-methionine = N(7)-methylguanosine(1405) in 16S rRNA + S-adenosyl-L-homocysteine. Its function is as follows. Specifically methylates the N(7) position of guanine 1405 in 16S rRNA. Confers resistance to various aminoglycosides, including gentamicin and kanamycin. This is 16S rRNA (guanine(1405)-N(7))-methyltransferase (grm) from Micromonospora echinospora (Micromonospora purpurea).